An 804-amino-acid polypeptide reads, in one-letter code: Serine/threonine-protein kinase ATG1 (804 aa).

One can recognise a Protein kinase domain in the interval 12–308; the sequence is FTIGPEIGRG…FQEFFNDPLI (297 aa). ATP contacts are provided by residues 18 to 26 and Lys41; that span reads IGRGSFANV. Residue Asp158 is the Proton acceptor of the active site. 3 disordered regions span residues 339–364, 395–415, and 455–506; these read TSPP…ERAP, INKS…KGAR, and PSPH…MPIS. Over residues 404 to 415 the composition is skewed to basic and acidic residues; sequence TVKDGQIKKGAR. Residues 462–495 show a composition bias toward polar residues; sequence NEHSAANPSGPTETQTQRRFSPSSRTSSIGSNRR.

This sequence belongs to the protein kinase superfamily. Ser/Thr protein kinase family. APG1/unc-51/ULK1 subfamily. In terms of assembly, homodimer. Forms a ternary complex with ATG13 and ATG17.

It is found in the cytoplasm. The protein resides in the preautophagosomal structure membrane. The catalysed reaction is L-seryl-[protein] + ATP = O-phospho-L-seryl-[protein] + ADP + H(+). The enzyme catalyses L-threonyl-[protein] + ATP = O-phospho-L-threonyl-[protein] + ADP + H(+). Serine/threonine protein kinase involved in the cytoplasm to vacuole transport (Cvt) and found to be essential in autophagy, where it is required for the formation of autophagosomes. Involved in the clearance of protein aggregates which cannot be efficiently cleared by the proteasome. Required for selective autophagic degradation of the nucleus (nucleophagy) as well as for mitophagy which contributes to regulate mitochondrial quantity and quality by eliminating the mitochondria to a basal level to fulfill cellular energy requirements and preventing excess ROS production. Also involved in endoplasmic reticulum-specific autophagic process, in selective removal of ER-associated degradation (ERAD) substrates. Plays a key role in ATG9 and ATG23 cycling through the pre-autophagosomal structure and is necessary to promote ATG18 binding to ATG9 through phosphorylation of ATG9. Catalyzes phosphorylation of ATG4, decreasing the interaction between ATG4 and ATG8 and impairing deconjugation of PE-conjugated forms of ATG8. The protein is Serine/threonine-protein kinase ATG1 of Pichia angusta (Yeast).